Reading from the N-terminus, the 331-residue chain is Ketol-acid reductoisomerase (NADP(+)) (331 aa).

Positions 2–182 (ARMYYDEDAN…GGTRAGVLET (181 aa)) constitute a KARI N-terminal Rossmann domain. Residues 25-28 (YGSQ), serine 51, serine 53, and 83-86 (DEVQ) each bind NADP(+). The active site involves histidine 108. Residue glycine 134 participates in NADP(+) binding. Residues 183-328 (TFREETETDL…KDLRAMFSWL (146 aa)) enclose the KARI C-terminal knotted domain. 4 residues coordinate Mg(2+): aspartate 191, glutamate 195, glutamate 227, and glutamate 231. Position 252 (serine 252) interacts with substrate.

Belongs to the ketol-acid reductoisomerase family. Mg(2+) is required as a cofactor.

The enzyme catalyses (2R)-2,3-dihydroxy-3-methylbutanoate + NADP(+) = (2S)-2-acetolactate + NADPH + H(+). It catalyses the reaction (2R,3R)-2,3-dihydroxy-3-methylpentanoate + NADP(+) = (S)-2-ethyl-2-hydroxy-3-oxobutanoate + NADPH + H(+). Its pathway is amino-acid biosynthesis; L-isoleucine biosynthesis; L-isoleucine from 2-oxobutanoate: step 2/4. It functions in the pathway amino-acid biosynthesis; L-valine biosynthesis; L-valine from pyruvate: step 2/4. Its function is as follows. Involved in the biosynthesis of branched-chain amino acids (BCAA). Catalyzes an alkyl-migration followed by a ketol-acid reduction of (S)-2-acetolactate (S2AL) to yield (R)-2,3-dihydroxy-isovalerate. In the isomerase reaction, S2AL is rearranged via a Mg-dependent methyl migration to produce 3-hydroxy-3-methyl-2-ketobutyrate (HMKB). In the reductase reaction, this 2-ketoacid undergoes a metal-dependent reduction by NADPH to yield (R)-2,3-dihydroxy-isovalerate. In Nostoc punctiforme (strain ATCC 29133 / PCC 73102), this protein is Ketol-acid reductoisomerase (NADP(+)).